The sequence spans 451 residues: Multidrug export protein MepA (451 aa).

A run of 12 helical transmembrane segments spans residues 26 to 46, 54 to 74, 97 to 117, 139 to 159, 170 to 190, 194 to 214, 245 to 265, 282 to 302, 318 to 338, 355 to 375, 397 to 417, and 418 to 438; these read MIGT…IGFL, AISL…LFGV, SFSI…TLPF, LKVM…EQFA, IGML…IFGF, VVGA…FFII, IPAF…NLFL, LVQF…PLIA, AVIM…FTIG, ATFI…GFLF, AIII…GVIW, and SLLI…YLLR.

This sequence belongs to the multi antimicrobial extrusion (MATE) (TC 2.A.66.1) family. MepA subfamily.

It localises to the cell membrane. In terms of biological role, multidrug resistance efflux protein. Contributes to resistance to the glycylcycline antibiotic tigecycline. The polypeptide is Multidrug export protein MepA (mepA) (Staphylococcus aureus (strain N315)).